Reading from the N-terminus, the 263-residue chain is MILIAGPCVIESQEMLRKIASELQPLSEDARIDFYFKASFDKANRTSLESYRGPGLEKGLEMLGRIKEEFGYKLLTDIHETQQVAKAAQVVDILQIPAFLCRQTDLIVEAAKSQSIVNIKKGQFMNPADMSHSVLKAIKTRGGSEASYEEAKRLGIWLTERGSSFGYGNLVVDMRSLMIMRQFAPVIFDATHAVQMPGAAGGKSGGDSRFVAPLSRAAAAVGVDGFFTETHVSPKEALSDGPNMITPQALKVLVHQLLALSEI.

Belongs to the KdsA family.

The protein resides in the cytoplasm. It carries out the reaction D-arabinose 5-phosphate + phosphoenolpyruvate + H2O = 3-deoxy-alpha-D-manno-2-octulosonate-8-phosphate + phosphate. It functions in the pathway carbohydrate biosynthesis; 3-deoxy-D-manno-octulosonate biosynthesis; 3-deoxy-D-manno-octulosonate from D-ribulose 5-phosphate: step 2/3. The protein operates within bacterial outer membrane biogenesis; lipopolysaccharide biosynthesis. The sequence is that of 2-dehydro-3-deoxyphosphooctonate aldolase from Wolinella succinogenes (strain ATCC 29543 / DSM 1740 / CCUG 13145 / JCM 31913 / LMG 7466 / NCTC 11488 / FDC 602W) (Vibrio succinogenes).